A 432-amino-acid chain; its full sequence is Adenosylhomocysteinase (432 aa).

Substrate is bound by residues T57, D131, and E156. 157–159 (TTT) contributes to the NAD(+) binding site. A Phosphoserine modification is found at S183. Positions 186 and 190 each coordinate substrate. K186 is subject to N6-(2-hydroxyisobutyryl)lysine. Y193 bears the Phosphotyrosine mark. Residues 222-227 (GDVGKG), E243, N248, 299-301 (IGH), N346, H353, K426, 426-430 (KPDHY), and Y430 contribute to the NAD(+) site.

It belongs to the adenosylhomocysteinase family. As to quaternary structure, homotetramer. Interaction with AHCYL1. Requires NAD(+) as cofactor.

It is found in the cytoplasm. Its subcellular location is the melanosome. The protein localises to the nucleus. The protein resides in the endoplasmic reticulum. It carries out the reaction S-adenosyl-L-homocysteine + H2O = L-homocysteine + adenosine. It participates in amino-acid biosynthesis; L-homocysteine biosynthesis; L-homocysteine from S-adenosyl-L-homocysteine: step 1/1. Catalyzes the hydrolysis of S-adenosyl-L-homocysteine to form adenosine and homocysteine. Binds copper ions. The protein is Adenosylhomocysteinase (Ahcy) of Rattus norvegicus (Rat).